Consider the following 313-residue polypeptide: Homeobox protein knotted-1-like 2 (313 aa).

The segment at 13-40 (DPSSAAASSPNPSFSPGGGGGGGVGGGE) is disordered. Residues 14–27 (PSSAAASSPNPSFS) show a composition bias toward low complexity. A compositionally biased stretch (gly residues) spans 28 to 38 (PGGGGGGGVGG). Residues 205 to 225 (ELKNELKQGYKEKLVDIREEI) form the ELK domain. The segment at residues 226-289 (LRKRRAGKLP…NQRKRNWHSN (64 aa)) is a DNA-binding region (homeobox; TALE-type). The tract at residues 282–313 (RKRNWHSNPASSGEKTKKKRNVTGDGGAEQSW) is disordered.

Belongs to the TALE/KNOX homeobox family. Isoform 1 is expressed in roots, leaf blades, leaf sheaths and flowers. Isoform 2 is expressed in leaf blades, leaf sheaths and flowers.

The protein localises to the nucleus. In Oryza sativa subsp. japonica (Rice), this protein is Homeobox protein knotted-1-like 2 (HOS58).